We begin with the raw amino-acid sequence, 215 residues long: Adenylate kinase (215 aa).

Residue glycine 10–threonine 15 coordinates ATP. Positions serine 30–valine 59 are NMP. AMP is bound by residues threonine 31, arginine 36, glutamine 57 to valine 59, glycine 85 to arginine 88, and glutamine 92. The LID stretch occupies residues glycine 121–aspartate 158. ATP is bound at residue arginine 122. 2 residues coordinate Zn(2+): cysteine 125 and cysteine 128. Residue isoleucine 131–phenylalanine 132 participates in ATP binding. 2 residues coordinate Zn(2+): cysteine 145 and cysteine 148. Positions 155 and 166 each coordinate AMP. Lysine 194 contacts ATP.

This sequence belongs to the adenylate kinase family. Monomer.

Its subcellular location is the cytoplasm. The enzyme catalyses AMP + ATP = 2 ADP. It participates in purine metabolism; AMP biosynthesis via salvage pathway; AMP from ADP: step 1/1. Functionally, catalyzes the reversible transfer of the terminal phosphate group between ATP and AMP. Plays an important role in cellular energy homeostasis and in adenine nucleotide metabolism. In Borrelia recurrentis (strain A1), this protein is Adenylate kinase.